The sequence spans 340 residues: MAITVYYDKDCDLNLIKSKKVAIIGFGSQGHAHAMNLRDNGVNVIIGLREGSVSAVKAKNAGFEVMSVSEASKTADVVMILAPDEIQADIFNVEIKPNLSEGKAIAFAHGFNIHYGQIVAPKGIDVIMIAPKAPGHTVRNEFTLGGGTPCLIAIHQDESKNAKNLALSYASAIGGGRTGIIETTFKAETETDLFGEQAVLCGGLSALIQAGFETLVEAGYEPEMAYFECLHEMKLIVDLIYQGGIADMRYSISNTAEYGDYITGPKIVTEETKKAMKGVLKDIQNGVFAKDFILERRAGFARMHAERKNMNDSLIEKTGRNLRAMMPWISAKKLVDKDKN.

One can recognise a KARI N-terminal Rossmann domain in the interval 1 to 183 (MAITVYYDKD…GGGRTGIIET (183 aa)). NADP(+) is bound by residues 26–29 (FGSQ), R49, S52, S54, and 84–87 (DEIQ). Residue H109 is part of the active site. G135 serves as a coordination point for NADP(+). Residues 184–329 (TFKAETETDL…RNLRAMMPWI (146 aa)) form the KARI C-terminal knotted domain. Mg(2+) contacts are provided by D192, E196, E228, and E232. S253 is a binding site for substrate.

This sequence belongs to the ketol-acid reductoisomerase family. The cofactor is Mg(2+).

The enzyme catalyses (2R)-2,3-dihydroxy-3-methylbutanoate + NADP(+) = (2S)-2-acetolactate + NADPH + H(+). It catalyses the reaction (2R,3R)-2,3-dihydroxy-3-methylpentanoate + NADP(+) = (S)-2-ethyl-2-hydroxy-3-oxobutanoate + NADPH + H(+). It functions in the pathway amino-acid biosynthesis; L-isoleucine biosynthesis; L-isoleucine from 2-oxobutanoate: step 2/4. The protein operates within amino-acid biosynthesis; L-valine biosynthesis; L-valine from pyruvate: step 2/4. Its function is as follows. Involved in the biosynthesis of branched-chain amino acids (BCAA). Catalyzes an alkyl-migration followed by a ketol-acid reduction of (S)-2-acetolactate (S2AL) to yield (R)-2,3-dihydroxy-isovalerate. In the isomerase reaction, S2AL is rearranged via a Mg-dependent methyl migration to produce 3-hydroxy-3-methyl-2-ketobutyrate (HMKB). In the reductase reaction, this 2-ketoacid undergoes a metal-dependent reduction by NADPH to yield (R)-2,3-dihydroxy-isovalerate. In Campylobacter jejuni subsp. jejuni serotype O:23/36 (strain 81-176), this protein is Ketol-acid reductoisomerase (NADP(+)).